The chain runs to 418 residues: MNKTHLTQTKFADLPLEKSLISGLTSQGYEYCTPIQALSLPITLTGKDIAGQAQTGTGKTLAFLPAVFHHLLTNAQPENRRKNQPRAIILAPTRELAIQIHKDAMVLASMSNLRLGLAYGGEKVEIQRTKLEKGVDILIGTTGRTIDFVKQGVIDMGSIQSVVLDEADRMFDLGFIKDIRYLFRRMPEAKSRLNMLFSATLSHKVQELAFEHMNDPESIQIEPEVMTSVNITEELFYPSNQDKILLLLSLIEEDWPDKAIVFANTKHTCEKVWGYLAGDGLRTGLLTGDVPQNKRLKILQQFTDGEIDILVATDVAARGLHIPKVSHVFNFDLPDDCEDYVHRIGRTGRAGEKGLAISFACEKYVFNLPAIEEYIKHPIPCSEYDKNAMLDSLPVMKVTKYKAHPNSRKDNYHRTHKR.

The Q motif signature appears at 9–37; that stretch reads TKFADLPLEKSLISGLTSQGYEYCTPIQA. A Helicase ATP-binding domain is found at 40–219; that stretch reads LPITLTGKDI…FEHMNDPESI (180 aa). ATP is bound at residue 53-60; sequence AQTGTGKT. A DEAD box motif is present at residues 165–168; it reads DEAD. The region spanning 243-390 is the Helicase C-terminal domain; it reads KILLLLSLIE…CSEYDKNAML (148 aa).

This sequence belongs to the DEAD box helicase family. RhlB subfamily. In terms of assembly, component of the RNA degradosome, which is a multiprotein complex involved in RNA processing and mRNA degradation.

It localises to the cytoplasm. The enzyme catalyses ATP + H2O = ADP + phosphate + H(+). Functionally, DEAD-box RNA helicase involved in RNA degradation. Has RNA-dependent ATPase activity and unwinds double-stranded RNA. The sequence is that of ATP-dependent RNA helicase RhlB from Psychromonas ingrahamii (strain DSM 17664 / CCUG 51855 / 37).